The primary structure comprises 834 residues: Taste receptor type 1 member 2 (834 aa).

Positions M1–A19 are cleaved as a signal peptide. Topologically, residues E20 to T561 are extracellular. N84, N292, N312, N363, N423, N482, and N522 each carry an N-linked (GlcNAc...) asparagine glycan. A helical membrane pass occupies residues I562 to X582. At X583 to P597 the chain is on the cytoplasmic side. A helical transmembrane segment spans residues M598–G618. The Extracellular portion of the chain corresponds to P619 to A630. Residues L631–V651 traverse the membrane as a helical segment. Residues C652–S676 lie on the Cytoplasmic side of the membrane. Residues V677–L697 traverse the membrane as a helical segment. Residues N698–S722 are Extracellular-facing. The chain crosses the membrane as a helical span at residues L723–M743. Topologically, residues G744 to K755 are cytoplasmic. Residues F756 to S776 form a helical membrane-spanning segment. Residues V777–D779 are Extracellular-facing. The helical transmembrane segment at G780–L800 threads the bilayer. The Cytoplasmic segment spans residues G801–D834.

This sequence belongs to the G-protein coupled receptor 3 family. TAS1R subfamily. In terms of assembly, forms heterodimers with TAS1R3.

It localises to the cell membrane. Functionally, putative taste receptor. TAS1R2/TAS1R3 recognizes diverse natural and synthetic sweeteners. This chain is Taste receptor type 1 member 2 (TAS1R2), found in Cebuella pygmaea (Pygmy marmoset).